The chain runs to 494 residues: NADH-quinone oxidoreductase subunit N 2 (494 aa).

14 helical membrane passes run 14–34 (LPQI…GMLL), 45–65 (IAML…PLTA), 82–102 (VVQV…GSVL), 116–136 (IGEF…LVST), 139–159 (LLLI…LTAF), 174–194 (FLFG…LYGV), 214–234 (LLVA…AAPF), 262–282 (FFVF…NAAW), 289–309 (WMPI…LAAL), 317–337 (LLAY…IAHT), 344–364 (LLYY…VLAI), 388–408 (ACLL…GFFA), 422–442 (AFGL…ALFY), and 470–490 (ITLL…NLLM).

The protein belongs to the complex I subunit 2 family. NDH-1 is composed of 14 different subunits. Subunits NuoA, H, J, K, L, M, N constitute the membrane sector of the complex.

The protein localises to the cell inner membrane. It catalyses the reaction a quinone + NADH + 5 H(+)(in) = a quinol + NAD(+) + 4 H(+)(out). NDH-1 shuttles electrons from NADH, via FMN and iron-sulfur (Fe-S) centers, to quinones in the respiratory chain. The immediate electron acceptor for the enzyme in this species is believed to be ubiquinone. Couples the redox reaction to proton translocation (for every two electrons transferred, four hydrogen ions are translocated across the cytoplasmic membrane), and thus conserves the redox energy in a proton gradient. The chain is NADH-quinone oxidoreductase subunit N 2 from Acidobacterium capsulatum (strain ATCC 51196 / DSM 11244 / BCRC 80197 / JCM 7670 / NBRC 15755 / NCIMB 13165 / 161).